The following is a 159-amino-acid chain: Globin CTT-W (159 aa).

The first 16 residues, 1–16 (MKFLVILTLCIAGAIA), serve as a signal peptide directing secretion. A Globin domain is found at 17-159 (HCDKAPFIKA…HHAIVYSILE (143 aa)). The heme b site is built by H73 and H108.

This sequence belongs to the globin family.

In Chironomus thummi piger (Midge), this protein is Globin CTT-W (CTT-W).